We begin with the raw amino-acid sequence, 153 residues long: Pheromone-binding protein Gp-9 (153 aa).

The signal sequence occupies residues 1 to 19 (MKTFVLHIFIFALVAFASA). 3 disulfide bridges follow: cysteine 37–cysteine 77, cysteine 73–cysteine 129, and cysteine 118–cysteine 138.

It belongs to the PBP/GOBP family. As to quaternary structure, homodimer.

It is found in the secreted. In terms of biological role, colony queen number, a major feature of social organization, is associated with worker genotype for Gp-9. Colonies are headed by either a single reproductive queen (monogyne form) or multiple queens (polygyne form). Differences in worker Gp-9 genotypes between social forms may cause differences in workers' abilities to recognize queens and regulate their numbers. The chain is Pheromone-binding protein Gp-9 from Solenopsis electra (Fire ant).